The following is a 4036-amino-acid chain: Hybrid PKS-NRPS synthetase iliA (4036 aa).

A Ketosynthase family 3 (KS3) domain is found at 7–439 (PEPIAVIGSA…GTNAHAIIES (433 aa)). Catalysis depends on for beta-ketoacyl synthase activity residues Cys-181, His-318, and His-359. The malonyl-CoA:ACP transacylase (MAT) domain stretch occupies residues 561-886 (IFTGQGAQWP…LKRNGSDVEA (326 aa)). Residues 955 to 1092 (HELLGRRTPD…GDLVVHLGAD (138 aa)) are N-terminal hotdog fold. The interval 955–1262 (HELLGRRTPD…ATNMVGEQDA (308 aa)) is dehydratase (DH) domain. The 309-residue stretch at 955–1263 (HELLGRRTPD…TNMVGEQDAS (309 aa)) folds into the PKS/mFAS DH domain. His-987 acts as the Proton acceptor; for dehydratase activity in catalysis. Residues 1109 to 1263 (LVNIDGERVY…TNMVGEQDAS (155 aa)) form a C-terminal hotdog fold region. Asp-1168 (proton donor; for dehydratase activity) is an active-site residue. The methyltransferase (MT) domain stretch occupies residues 1402 to 1601 (EDDMLDRFYM…FSGADTVMHD (200 aa)). Residues 2136–2277 (KTYFMVGMAG…SVATVIGNIG (142 aa)) are ketoreductase (KR) domain. The Carrier 1 domain occupies 2425 to 2502 (EAVAAVVKAF…QVCTWATKKV (78 aa)). Ser-2462 is subject to O-(pantetheine 4'-phosphoryl)serine. Disordered stretches follow at residues 2520–2583 (AEKT…KLGT) and 2597–2621 (DADARSESTGSSGMADSDDSSNRPE). Residues 2530-2540 (APAPDAAPAPA) show a composition bias toward pro residues. Residues 2627–3054 (IMSQAQSRIW…HLDITECEIY (428 aa)) are condensation (C) domain. The segment at 3088–3485 (SLHSDKSAVK…GTLLCLGRLD (398 aa)) is adenylation (A) (KR) domain. The interval 3088-3485 (SLHSDKSAVK…GTLLCLGRLD (398 aa)) is reductase (RED) domain. The Carrier 2 domain maps to 3596–3675 (EKMTIREGEV…EMARRIDEHQ (80 aa)). Position 3635 is an O-(pantetheine 4'-phosphoryl)serine (Ser-3635).

It in the C-terminal section; belongs to the NRP synthetase family.

It catalyses the reaction L-tyrosine + holo-[ACP] + 7 malonyl-CoA + acetyl-CoA + 8 AH2 + 2 S-adenosyl-L-methionine + ATP + 4 H(+) = N-[(4E,6E,10S,12Z,14E)-6,10-dimethyl-3-oxohexadeca-4,6,12,14-tetraenoyl]-L-tyrosyl-[ACP] + 8 A + AMP + 2 S-adenosyl-L-homocysteine + 7 CO2 + diphosphate + 8 CoA + 6 H2O. Its pathway is mycotoxin biosynthesis. Its function is as follows. Hybrid PKS-NRPS synthetase; part of the gene cluster that mediates the biosynthesis of ilicicolin H, a 4-hydroxy-2-pyridonealkaloid that has potent and broad antifungal activities by inhibiting the mitochondrial respiration chain. IliA assembles the backbone of ilicicolin H. The PKS portion and trans-acting enoyl reductase iliB work together to construct an octaketide, and two methyl groups are introduced by the MT domain during the chain assembly. The nascent chain is then condensed with tyrosine, catalyzed by the C domain, and the resulting PKS-NRPS hybrid is offloaded by the RED domain to form an advanced tetramic acid intermediate. The biosynthesis of ilicicolin H starts with formation of the tetramic acid by the hybrid PKS-NRPS synthetase iliA with the partnering trans-enoyl reductase iliB since iliA lacks a designated enoylreductase (ER) domain. The cytochrome P450 monooxygenase iliC then catalyzes the ring expansion of the tetramate to the acyclic 2-pyridone. The pericyclase iliD further converts the acyclic 2-pyridone into 8-epi-ilicicolin H. 8-epi-ilicicolin H might then spontaneously convert to ilicicolin H, since ilicicolin H is produced in the absence of the epimerase iliE, in contrast to what was observed for the Talaromyces variabilis ilicolin H biosynthetic pathway. The polypeptide is Hybrid PKS-NRPS synthetase iliA (Neonectria sp. (strain DH2)).